The sequence spans 180 residues: UPF0340 protein YwlG (180 aa).

The protein belongs to the UPF0340 family.

The sequence is that of UPF0340 protein YwlG (ywlG) from Bacillus subtilis (strain 168).